A 133-amino-acid chain; its full sequence is Small ribosomal subunit protein uS8 (133 aa).

Belongs to the universal ribosomal protein uS8 family. As to quaternary structure, part of the 30S ribosomal subunit. Contacts proteins S5 and S12.

Functionally, one of the primary rRNA binding proteins, it binds directly to 16S rRNA central domain where it helps coordinate assembly of the platform of the 30S subunit. In Cyanothece sp. (strain PCC 7425 / ATCC 29141), this protein is Small ribosomal subunit protein uS8.